A 261-amino-acid chain; its full sequence is Antiviral protein S (261 aa).

Cystine bridges form between Cys34–Cys258 and Cys84–Cys105. Glu175 is a catalytic residue.

Belongs to the ribosome-inactivating protein family. Type 1 RIP subfamily.

It carries out the reaction Endohydrolysis of the N-glycosidic bond at one specific adenosine on the 28S rRNA.. Functionally, inhibits viral infection of plants, and protein synthesis in vitro. The chain is Antiviral protein S from Phytolacca americana (American pokeweed).